The following is a 233-amino-acid chain: Peptidyl-tRNA hydrolase (233 aa).

A tRNA-binding site is contributed by tyrosine 14. Histidine 19 (proton acceptor) is an active-site residue. Residues phenylalanine 64, asparagine 66, and asparagine 112 each contribute to the tRNA site. Residues 187–233 (VSPRRSGTGQKGKDKPPAPAKQQATATKAEPEPDTRSALQKLMERFK) are disordered.

The protein belongs to the PTH family. In terms of assembly, monomer.

The protein resides in the cytoplasm. It carries out the reaction an N-acyl-L-alpha-aminoacyl-tRNA + H2O = an N-acyl-L-amino acid + a tRNA + H(+). Functionally, hydrolyzes ribosome-free peptidyl-tRNAs (with 1 or more amino acids incorporated), which drop off the ribosome during protein synthesis, or as a result of ribosome stalling. Catalyzes the release of premature peptidyl moieties from peptidyl-tRNA molecules trapped in stalled 50S ribosomal subunits, and thus maintains levels of free tRNAs and 50S ribosomes. The polypeptide is Peptidyl-tRNA hydrolase (Roseobacter denitrificans (strain ATCC 33942 / OCh 114) (Erythrobacter sp. (strain OCh 114))).